Here is a 224-residue protein sequence, read N- to C-terminus: Menaquinol:cytochrome c reductase cytochrome b subunit (224 aa).

Residues 37–57 (FSAFVYCFGGLTFFVTVIQIL) traverse the membrane as a helical segment. Tyrosine 42 provides a ligand contact to heme b. Cysteine 43 is a heme c binding site. Heme b-binding residues include arginine 91, histidine 94, histidine 108, and arginine 111. 3 helical membrane passes run 96–116 (WGAS…FFQG), 126–146 (WIVG…GYLL), and 195–215 (IHVF…FLMI). 2 residues coordinate heme b: histidine 196 and histidine 211. Residues arginine 216 and isoleucine 220 each contribute to the heme c site. Heme b is bound at residue serine 221.

This sequence belongs to the cytochrome b family. As to quaternary structure, the main subunits of the menaquinol:cytochrome c complex are a Rieske-type iron-sulfur protein (QcrA), a cytochrome b (QcrB) and a cytochrome c (QcrC). It depends on heme b as a cofactor. Requires heme c as cofactor.

The protein localises to the cell membrane. Functionally, component of the menaquinol:cytochrome c reductase complex. The chain is Menaquinol:cytochrome c reductase cytochrome b subunit (qcrB) from Geobacillus thermodenitrificans.